A 571-amino-acid polypeptide reads, in one-letter code: Chitin-inducible gibberellin-responsive protein 1 (571 aa).

Polar residues predominate over residues 61–77 (TNTPDNQSSTETISAQP). Disordered stretches follow at residues 61–80 (TNTP…PISP) and 151–180 (QRSR…YPTA). Positions 192–571 (ELREDPQIIV…RKLISASAWH (380 aa)) constitute a GRAS domain. Positions 199 to 259 (IIVKQLLTRC…VARHGNSGTN (61 aa)) are leucine repeat I (LRI). The VHIID stretch occupies residues 278 to 343 (MRILYNICPY…GGPPRVRITG (66 aa)). The VHIID motif lies at 309-313 (IHIID). Residues 359–391 (IVGKMLKSMSEEFKIPLEFTPLSVYATQVTKEM) form a leucine repeat II (LRII) region. The interval 400–494 (LSVNFTLQLH…QHCLAKDIVN (95 aa)) is PFYRE. The SAW stretch occupies residues 497–571 (ACEGKDRVER…RKLISASAWH (75 aa)).

This sequence belongs to the GRAS family.

The protein localises to the nucleus. May play a regulatory role in the early step of oligosaccharide elicitor response, downstream of the membrane-associated high-affinity chitin-binding protein. The polypeptide is Chitin-inducible gibberellin-responsive protein 1 (CIGR1) (Oryza sativa subsp. japonica (Rice)).